We begin with the raw amino-acid sequence, 260 residues long: Endonuclease NucS (260 aa).

Belongs to the NucS endonuclease family.

The protein localises to the cytoplasm. In terms of biological role, cleaves both 3' and 5' ssDNA extremities of branched DNA structures. The protein is Endonuclease NucS of Methanopyrus kandleri (strain AV19 / DSM 6324 / JCM 9639 / NBRC 100938).